The sequence spans 522 residues: Leucine-rich repeat transmembrane neuronal protein 1 (522 aa).

The first 34 residues, 1–34 (MDFLLLGLCLYWLLRRPSGVVLCLLGACFQMLPA), serve as a signal peptide directing secretion. One can recognise an LRRNT domain in the interval 35-63 (APSGCPQLCRCEGRLLYCEALNLTEAPHN). The Extracellular portion of the chain corresponds to 35-427 (APSGCPQLCR…HAENAVQIHK (393 aa)). Residues N56 and N63 are each glycosylated (N-linked (GlcNAc...) asparagine). 10 LRR repeats span residues 64 to 87 (LSGLLGLSLRYNSLSELRAGQFTG), 89 to 111 (MQLTWLYLDHNHICSVQGDAFQK), 112 to 135 (LRRVKELTLSSNQITQLPNTTFRP), 137 to 159 (PNLRSVDLSYNKLQALAPDLFHG), 161 to 183 (RKLTTLHMRANAIQFVPVRIFQD), 184 to 207 (CRSLKFLDIGYNQLKSLARNSFAG), 209 to 231 (FKLTELHLEHNDLVKVNFAHFPR), 233 to 255 (ISLHSLCLRRNKVAIVVSSLDWV), 256 to 278 (WNLEKMDLSGNEIEYMEPHVFET), and 279 to 302 (VPHLQSLQLDSNRLTYIEPRILNS). A glycan (N-linked (GlcNAc...) asparagine) is linked at N130. Residues 314-365 (NLWDCGRNVCALASWLNNFQGRYDGNLQCASPEYAQGEDVLDAVYAFHLCED) enclose the LRRCT domain. N380 is a glycosylation site (N-linked (GlcNAc...) asparagine). The interval 382–401 (SDLGPPASSATTLADGGEGQ) is disordered. A helical membrane pass occupies residues 428–448 (VVTGTMALIFSFLIVVLVLYV). Residues 449–522 (SWKCFPASLR…HQQPARECEV (74 aa)) lie on the Cytoplasmic side of the membrane.

Belongs to the LRRTM family. As to expression, predominantly expressed in forebrain regions including thalamus and cerebral cortex.

The protein resides in the cell membrane. It localises to the postsynaptic cell membrane. In terms of biological role, exhibits strong synaptogenic activity, restricted to excitatory presynaptic differentiation, acting at both pre- and postsynaptic level. The sequence is that of Leucine-rich repeat transmembrane neuronal protein 1 (LRRTM1) from Homo sapiens (Human).